The sequence spans 547 residues: Chaperonin GroEL (547 aa).

Residues 30–33 (TLGP), Lys51, 87–91 (DGTTT), Gly415, 479–481 (NAA), and Asp495 contribute to the ATP site.

Belongs to the chaperonin (HSP60) family. Forms a cylinder of 14 subunits composed of two heptameric rings stacked back-to-back. Interacts with the co-chaperonin GroES.

The protein resides in the cytoplasm. It carries out the reaction ATP + H2O + a folded polypeptide = ADP + phosphate + an unfolded polypeptide.. Functionally, together with its co-chaperonin GroES, plays an essential role in assisting protein folding. The GroEL-GroES system forms a nano-cage that allows encapsulation of the non-native substrate proteins and provides a physical environment optimized to promote and accelerate protein folding. In Bordetella pertussis (strain Tohama I / ATCC BAA-589 / NCTC 13251), this protein is Chaperonin GroEL.